The following is a 259-amino-acid chain: Proteasome subunit beta type-4 (259 aa).

Belongs to the peptidase T1B family. The 26S proteasome consists of a 20S proteasome core and two 19S regulatory subunits. The 20S proteasome core is composed of 28 subunits that are arranged in four stacked rings, resulting in a barrel-shaped structure. The two end rings are each formed by seven alpha subunits, and the two central rings are each formed by seven beta subunits. The catalytic chamber with the active sites is on the inside of the barrel.

The protein resides in the cytoplasm. The protein localises to the nucleus. Its function is as follows. Non-catalytic component of the proteasome, a multicatalytic proteinase complex which is characterized by its ability to cleave peptides with Arg, Phe, Tyr, Leu, and Glu adjacent to the leaving group at neutral or slightly basic pH. The proteasome has an ATP-dependent proteolytic activity. This chain is Proteasome subunit beta type-4 (psmB4-1), found in Dictyostelium discoideum (Social amoeba).